A 101-amino-acid chain; its full sequence is Small ribosomal subunit protein uS14 (101 aa).

The tract at residues 44-74 (ASRKLSRLPRDSSPVRLRNRDQVDGRPRGYV) is disordered. Residues 61-70 (RNRDQVDGRP) are compositionally biased toward basic and acidic residues.

The protein belongs to the universal ribosomal protein uS14 family. In terms of assembly, part of the 30S ribosomal subunit. Contacts proteins S3 and S10.

In terms of biological role, binds 16S rRNA, required for the assembly of 30S particles and may also be responsible for determining the conformation of the 16S rRNA at the A site. The sequence is that of Small ribosomal subunit protein uS14 from Cutibacterium acnes (strain DSM 16379 / KPA171202) (Propionibacterium acnes).